We begin with the raw amino-acid sequence, 776 residues long: K(+) efflux antiporter 3, chloroplastic (776 aa).

The N-terminal 72 residues, 1-72 (MAISTMLGSI…KVFLDTSKRF (72 aa)), are a transit peptide targeting the chloroplast. Topologically, residues 73–93 (YFQGRWSESSGRRVETYAGVD) are lumenal, thylakoid. Residues 94 to 114 (VASAVDVINDLGFDTLTFLMV) traverse the membrane as a helical segment. Position 115 (Thr-115) is a topological domain, stromal. A helical membrane pass occupies residues 116–136 (VIIVPAFRILKASPILGFFFA). Residues 137–153 (GVVLNQFGLIRNLTDVK) lie on the Lumenal, thylakoid side of the membrane. A helical membrane pass occupies residues 154–174 (VLSEWGILFLLFEMGLELSLA). At 175-181 (RLKALAK) the chain is on the stromal side. The chain crosses the membrane as a helical span at residues 182–202 (FAFGMGLTQVLLCTAAFTAFE). The Lumenal, thylakoid segment spans residues 203-232 (LPPNGAIGTKILEFLFHSRPDLVNIRSIDE). Residues 233–253 (AVVIGAALSLSSSAFVLQLLA) traverse the membrane as a helical segment. Over 254–266 (EKGELPTRFGSAT) the chain is Stromal. A helical transmembrane segment spans residues 267-287 (LGILLLQDIAVVPLLVILPVL). Residues 288-296 (ESQDIGGES) are Lumenal, thylakoid-facing. The helical transmembrane segment at 297–317 (IWPMLAKESAKALGGLGILSL) threads the bilayer. The Stromal segment spans residues 318–338 (GGKFFLRRIFEVVAETRSSEA). The helical transmembrane segment at 339–359 (FVALCLLTVAGTSLVTQWLGF) threads the bilayer. Residues 360–389 (SDTLGAFLAGALLAETNFRTQIEADIRPFR) are Lumenal, thylakoid-facing. Residues 390 to 410 (GLLLGLFFVTTGTSIDMEVLF) traverse the membrane as a helical segment. The Stromal portion of the chain corresponds to 411 to 415 (REWPN). A helical membrane pass occupies residues 416 to 436 (VLSLLGGLIVIKTLIITAIGP). Residues 437–445 (RVGLTIQES) are Lumenal, thylakoid-facing. Residues 446-466 (VRVGFLLSQGGEFAFVVFSLA) traverse the membrane as a helical segment. Residues 467–468 (NR) lie on the Stromal side of the membrane. A helical transmembrane segment spans residues 469–489 (LGVLPNELNKLLIIVVVLSMA). Over 490-526 (LTPYLNQLGRKAADFLDERLDPGEKIGEDVNFDVSES) the chain is Lumenal, thylakoid. An RCK N-terminal domain is found at 524 to 649 (SESIVIIGFG…KKAGATDAIL (126 aa)). Residues 527–547 (IVIIGFGQMGQVLANFLSTPL) traverse the membrane as a helical segment. Over 548-776 (VSDSDLVGWP…FVGKADKAQD (229 aa)) the chain is Stromal. The tract at residues 728-776 (MQMKASDSNSDSAAEILQETAGLSQPPEIDDSSVNIDNGFVGKADKAQD) is disordered.

The protein belongs to the monovalent cation:proton antiporter 2 (CPA2) transporter (TC 2.A.37) family. KEA (TC 2.A.37.1) subfamily. In terms of tissue distribution, expressed at low levels in flowers, siliques and leaves. Expressed at low levels in flowers and leaves. As to expression, most abundant splice form in all organs, including siliques, flowers, leaves and roots. Preferentially expressed in photosynthetically active tissues, including seedling cotyledons and mature leaves. In terms of tissue distribution, expressed in shoots and roots.

Its subcellular location is the plastid. The protein localises to the chloroplast membrane. The protein resides in the golgi apparatus membrane. It localises to the chloroplast thylakoid membrane. It catalyses the reaction K(+)(in) + H(+)(out) = K(+)(out) + H(+)(in). Its activity is regulated as follows. Regulated by a mechanism involving lumenal C-terminus region; a fine-tuned balance between photoprotective energy dissipation in high light and a maximum quantum yield in low light involves a reduced activity under high light. Functionally, electroneutral K(+)/H(+) efflux antiporter assuring proton efflux from the thylakoid lumen to the plastid stroma, thus increasing the membrane potential at the expense of the proton gradient (delta pH) component of the proton motive force (PMF). Promotes photosynthesis and growth in conditions where the chloroplast (cp)ATP synthase activity is low (e.g. cgl160 mutant background) by reducing the pH gradient across the thylakoid membrane. Accelerates photosynthetic acclimation in fluctuating light environments by modulating two components of the proton motive force, the proton gradient and the electric potential (delta Psi). Promotes the relaxation of photoprotective energy-dependent non-photochemical quenching (NPQ) after transitions from high to low light, thus enhancing photosystem II (PSII) quantum efficiency in fluctuating light. On transition from high to low light, slows down photoprotection by dissipating the pH gradient across the thylakoid membrane. During photosynthetic response on transition from dark to low light, involved in a sequential mechanism of adaptation; VCCN1 and CLCe first trigger the activation of photoprotection, which is later down-regulated by KEA3 to a low steady state, while adjusting electron transport. Together with the chloroplast NADH dehydrogenase-like (NDH) complex, maximizes photosynthesis efficiency after a long dark adaptation. Required in roots for rapid hyperosmotic-induced Ca(2+) responses and for osmo-sensory potentiation in hyperosmotic conditions. In terms of biological role, low K(+)/H(+) efflux antiporter activity. Low K(+)/H(+) efflux antiporter activity. Promotes non-photochemical quenching (NPQ) in high light conditions. This is K(+) efflux antiporter 3, chloroplastic from Arabidopsis thaliana (Mouse-ear cress).